We begin with the raw amino-acid sequence, 822 residues long: von Willebrand factor A domain-containing protein 5A (822 aa).

A VIT domain is found at 1 to 131; sequence MEHHWGLITG…KVAVTLRYVQ (131 aa). The region spanning 281–469 is the VWFA domain; sequence EFVFLMDRSG…LALQCALDDI (189 aa). Residues 657 to 682 form a disordered region; the sequence is SMPSPAPIENQGVADSSNEKSNSQNE. Residues 669–680 show a composition bias toward polar residues; sequence VADSSNEKSNSQ.

Its function is as follows. May play a role in tumorigenesis as a tumor suppressor. Altered expression of this protein and disruption of the molecular pathway it is involved in may contribute directly to or modify tumorigenesis. The sequence is that of von Willebrand factor A domain-containing protein 5A (Vwa5a) from Rattus norvegicus (Rat).